We begin with the raw amino-acid sequence, 276 residues long: NH(3)-dependent NAD(+) synthetase (276 aa).

43–50 (GISGGVDS) contributes to the ATP binding site. Mg(2+) is bound at residue D49. R146 is a deamido-NAD(+) binding site. An ATP-binding site is contributed by T166. Residue E171 coordinates Mg(2+). Deamido-NAD(+) contacts are provided by K179 and D186. Positions 195 and 217 each coordinate ATP. Residue 266-267 (HK) coordinates deamido-NAD(+).

Belongs to the NAD synthetase family. As to quaternary structure, homodimer.

It catalyses the reaction deamido-NAD(+) + NH4(+) + ATP = AMP + diphosphate + NAD(+) + H(+). Its pathway is cofactor biosynthesis; NAD(+) biosynthesis; NAD(+) from deamido-NAD(+) (ammonia route): step 1/1. Catalyzes the ATP-dependent amidation of deamido-NAD to form NAD. Uses ammonia as a nitrogen source. The sequence is that of NH(3)-dependent NAD(+) synthetase from Shewanella halifaxensis (strain HAW-EB4).